A 631-amino-acid chain; its full sequence is Chaperone protein HtpG (631 aa).

Residues 1 to 342 (MSEQTANKET…SNDLPLNVSR (342 aa)) are a; substrate-binding. Positions 343 to 559 (EILQDNKVTQ…DFEMGTQMAK (217 aa)) are b. Positions 560-631 (LLEAAGQAAP…LSAMNQLLAK (72 aa)) are c.

Belongs to the heat shock protein 90 family. In terms of assembly, homodimer.

The protein resides in the cytoplasm. Functionally, molecular chaperone. Has ATPase activity. In Aliivibrio fischeri (strain ATCC 700601 / ES114) (Vibrio fischeri), this protein is Chaperone protein HtpG.